The chain runs to 140 residues: Ribosome-binding factor A (140 aa).

A disordered region spans residues 1–23; the sequence is MLRDRNRSGVRGGAEGPSQRQRR.

The protein belongs to the RbfA family. Monomer. Binds 30S ribosomal subunits, but not 50S ribosomal subunits or 70S ribosomes.

Its subcellular location is the cytoplasm. In terms of biological role, one of several proteins that assist in the late maturation steps of the functional core of the 30S ribosomal subunit. Associates with free 30S ribosomal subunits (but not with 30S subunits that are part of 70S ribosomes or polysomes). Required for efficient processing of 16S rRNA. May interact with the 5'-terminal helix region of 16S rRNA. The sequence is that of Ribosome-binding factor A from Acidiphilium cryptum (strain JF-5).